The sequence spans 87 residues: MSQAEFDKAAEDVKHLKTKPADDEMLYIYSHYKQATVGDINTERPGLLDLRGKAKWDAWNQLKGTSKEDAMKAYVNKVEDLKKKYGI.

N-acetylserine is present on S2. The ACB domain maps to 2–87; sequence SQAEFDKAAE…VEDLKKKYGI (86 aa). The residue at position 8 (K8) is an N6-acetyllysine; alternate. The residue at position 8 (K8) is an N6-succinyllysine; alternate. An acyl-CoA is bound at residue K14. The residue at position 17 (K17) is an N6-succinyllysine. The residue at position 19 (K19) is an N6-acetyllysine. The residue at position 29 (Y29) is a Phosphotyrosine. An acyl-CoA is bound by residues 29-33, K55, and Y74; that span reads YSHYK. K55 is modified (N6-acetyllysine; alternate). The residue at position 55 (K55) is an N6-succinyllysine; alternate. The residue at position 55 (K55) is an N6-(2-hydroxyisobutyryl)lysine; alternate. K55 is modified (N6-malonyllysine; alternate). N6-acetyllysine; alternate is present on K77. K77 is modified (N6-succinyllysine; alternate).

It belongs to the ACBP family. In terms of assembly, monomer.

Its subcellular location is the endoplasmic reticulum. It is found in the golgi apparatus. Its function is as follows. Binds medium- and long-chain acyl-CoA esters with very high affinity and may function as an intracellular carrier of acyl-CoA esters. This Canis lupus familiaris (Dog) protein is Acyl-CoA-binding protein (DBI).